A 419-amino-acid polypeptide reads, in one-letter code: MYEPTLTVESFDSELAGAIRDERRRQEHHVELIASENYVSPRVLELQGSVLTNKYAEGYPGRRYYGGCEFVDIAEQLAIDRAKELFGADYANVQPHSGSQANAEAYMALMNPGDTLLAMDLSHGGHLTHGSPVSFSGKFYKAVHYGLNAHGDIDYEQAAQLAQEHKPKVILAGFSAFSGIVDWQRFREIADSVNAYFMTDIAHVAGLVAAGVYPSPVQIADVTTTTTHKTLRGPRAGLILAKANPELEKRLNSAVFPGSQGGPLMHIIAAKAVAFKEAMQPEFKTYAQQILKNAKAMAEVMKERGYTIVSGGTQNHLFLVSLLDKNISGKEAEAALGRANITVNKNTVPGETRSPFVTSGLRIGTPAITTRGFKEKEASQLAHWVCDILDDIHNEKVIADVKQKADELCGKFPVYQELD.

(6S)-5,6,7,8-tetrahydrofolate contacts are provided by residues Leu121 and 125–127 (GHL). The residue at position 229 (Lys229) is an N6-(pyridoxal phosphate)lysine. A (6S)-5,6,7,8-tetrahydrofolate-binding site is contributed by 354-356 (SPF).

It belongs to the SHMT family. Homodimer. Requires pyridoxal 5'-phosphate as cofactor.

Its subcellular location is the cytoplasm. It catalyses the reaction (6R)-5,10-methylene-5,6,7,8-tetrahydrofolate + glycine + H2O = (6S)-5,6,7,8-tetrahydrofolate + L-serine. It participates in one-carbon metabolism; tetrahydrofolate interconversion. The protein operates within amino-acid biosynthesis; glycine biosynthesis; glycine from L-serine: step 1/1. Its function is as follows. Catalyzes the reversible interconversion of serine and glycine with tetrahydrofolate (THF) serving as the one-carbon carrier. This reaction serves as the major source of one-carbon groups required for the biosynthesis of purines, thymidylate, methionine, and other important biomolecules. Also exhibits THF-independent aldolase activity toward beta-hydroxyamino acids, producing glycine and aldehydes, via a retro-aldol mechanism. The sequence is that of Serine hydroxymethyltransferase from Coxiella burnetii (strain CbuK_Q154) (Coxiella burnetii (strain Q154)).